We begin with the raw amino-acid sequence, 312 residues long: Malate dehydrogenase (312 aa).

Residues 12–17 (GAGFTG) and aspartate 36 each bind NAD(+). Positions 87 and 93 each coordinate substrate. Residues asparagine 100 and 123 to 125 (LTN) contribute to the NAD(+) site. Asparagine 125 serves as a coordination point for substrate. Serine 149 carries the post-translational modification Phosphoserine. Arginine 156 is a substrate binding site. Residue histidine 180 is the Proton acceptor of the active site.

Belongs to the LDH/MDH superfamily. MDH type 3 family.

The enzyme catalyses (S)-malate + NAD(+) = oxaloacetate + NADH + H(+). Functionally, catalyzes the reversible oxidation of malate to oxaloacetate. In Bacillus cereus (strain ZK / E33L), this protein is Malate dehydrogenase.